Consider the following 510-residue polypeptide: Lysine--tRNA ligase (510 aa).

2 residues coordinate Mg(2+): Glu420 and Glu427.

Belongs to the class-II aminoacyl-tRNA synthetase family. As to quaternary structure, homodimer. Requires Mg(2+) as cofactor.

It is found in the cytoplasm. It catalyses the reaction tRNA(Lys) + L-lysine + ATP = L-lysyl-tRNA(Lys) + AMP + diphosphate. The protein is Lysine--tRNA ligase of Ralstonia nicotianae (strain ATCC BAA-1114 / GMI1000) (Ralstonia solanacearum).